We begin with the raw amino-acid sequence, 433 residues long: Serine hydroxymethyltransferase (433 aa).

Residues Leu-132 and 136–138 (GHL) each bind (6S)-5,6,7,8-tetrahydrofolate. Lys-241 is modified (N6-(pyridoxal phosphate)lysine).

This sequence belongs to the SHMT family. Homodimer. Requires pyridoxal 5'-phosphate as cofactor.

The protein resides in the cytoplasm. The enzyme catalyses (6R)-5,10-methylene-5,6,7,8-tetrahydrofolate + glycine + H2O = (6S)-5,6,7,8-tetrahydrofolate + L-serine. It functions in the pathway one-carbon metabolism; tetrahydrofolate interconversion. It participates in amino-acid biosynthesis; glycine biosynthesis; glycine from L-serine: step 1/1. Its function is as follows. Catalyzes the reversible interconversion of serine and glycine with tetrahydrofolate (THF) serving as the one-carbon carrier. This reaction serves as the major source of one-carbon groups required for the biosynthesis of purines, thymidylate, methionine, and other important biomolecules. Also exhibits THF-independent aldolase activity toward beta-hydroxyamino acids, producing glycine and aldehydes, via a retro-aldol mechanism. This is Serine hydroxymethyltransferase from Afipia carboxidovorans (strain ATCC 49405 / DSM 1227 / KCTC 32145 / OM5) (Oligotropha carboxidovorans).